The primary structure comprises 624 residues: MAKQEQRFDYVKIALASPERIRQWGERTLPNGQVVGEVTKPETINYRTLKPEMDGLFCEKIFGPAKDWECHCGKYKRVRHRGIVCERCGVEVTESRVRRHRMGFIKLAAPVAHVWYLKGIPSYIAILLDMPLRDVEQIVYFNSYVVLNPGNHSELQYKQLLNEDQWMEIEDQIYAEESDLEGIEVGIGAEALQQLLQDLNLNEESEKLRQEIAESKGQKRAKLIKRLRVIDNFIGTESRPEWMVLNVIPVIPPDLRPMVQLDGGRFATSDLNDLYRRVINRNNRLARLQEILAPEIIVRNEKRMLQEAVDALIDNGRRGRTVVGANNRPLKSLSDIIEGKQGRFRQNLLGKRVDYSGRSVIVVGPNLKIHQCGLPREMAIELFQPFVIHRLIKNHSINNIKQAKKLIQKNDPLIWDVLEEVIEGHPVMLNRAPTLHRLGIQAFEPILVEGRAIQLHPLVCPAFNADFDGDQMAVHVPLSIEAQAEARMLMLASGNILSPATGQPIVTPSQDMVLGCYYLTAENPGAQKGAGRYFANLEDAIRAFEQGSVDLHAWVWVRFDGEVESEGESDEPESVVAADDGTVTKTYRFRRIRETEDGQRLSQYVKTTPGRILFNNTVQTALIH.

The Zn(2+) site is built by C70, C72, C85, and C88. D466, D468, and D470 together coordinate Mg(2+).

Belongs to the RNA polymerase beta' chain family. RpoC1 subfamily. In cyanobacteria the RNAP catalytic core is composed of 2 alpha, 1 beta, 1 beta', 1 gamma and 1 omega subunit. When a sigma factor is associated with the core the holoenzyme is formed, which can initiate transcription. Requires Mg(2+) as cofactor. Zn(2+) is required as a cofactor.

The enzyme catalyses RNA(n) + a ribonucleoside 5'-triphosphate = RNA(n+1) + diphosphate. DNA-dependent RNA polymerase catalyzes the transcription of DNA into RNA using the four ribonucleoside triphosphates as substrates. The sequence is that of DNA-directed RNA polymerase subunit gamma from Synechococcus elongatus (strain ATCC 33912 / PCC 7942 / FACHB-805) (Anacystis nidulans R2).